Consider the following 783-residue polypeptide: Probable potassium transporter 2 (783 aa).

Over 1 to 21 (MDAEAGVGGADQLPWRQHYRN) the chain is Cytoplasmic. The chain crosses the membrane as a helical span at residues 22–42 (LLLLAYQSFGVVYGDLSTSPL). At 43–61 (YVYKSTFSGRLRRYQDEQT) the chain is on the extracellular side. A helical membrane pass occupies residues 62–82 (VFGVLSLIFWTFTLIPLLKYV). At 83 to 152 (TIVLSADDNG…FMEKHKNART (70 aa)) the chain is on the cytoplasmic side. Residues 153 to 173 (VLLLIVLCGASMMIGDGILTP) form a helical membrane-spanning segment. Residues 174–189 (AISVLSSMSGLKVRAT) are Extracellular-facing. The chain crosses the membrane as a helical span at residues 190–210 (GLHDRSVVLLSCIVLVGLFAL). Residues 211 to 217 (QHRGTQK) are Cytoplasmic-facing. The chain crosses the membrane as a helical span at residues 218 to 238 (VAFMFAPIVVIWLFCIGGIGL). Topologically, residues 239–268 (YNIIHWNPRIYQALSPYYIVKFFRTTGKDG) are extracellular. A helical membrane pass occupies residues 269-289 (WIALGGILLSMTGCEAMFADL). Over 290 to 298 (GHFTSASVR) the chain is Cytoplasmic. The helical transmembrane segment at 299–319 (LAFITIIYPCLILQYMGQAAF) threads the bilayer. The Extracellular segment spans residues 320 to 338 (LSKNILDMPTGFYDSIPGP). A helical membrane pass occupies residues 339-359 (IFWPVFVVATLAAVVGSQAVI). Over 360–390 (SATFSIVKQCHSLGCFPRVKVVHTSRWIYGQ) the chain is Cytoplasmic. A helical membrane pass occupies residues 391 to 411 (IYIPEINWILMVLCVAVTVAF). Residues 412-422 (RDITLIGNAYG) lie on the Extracellular side of the membrane. A helical transmembrane segment spans residues 423 to 443 (VACMTVMFVTTFLMALIMIFV). Over 444-447 (WQKN) the chain is Cytoplasmic. A helical membrane pass occupies residues 448 to 468 (IIFALSFFLLFGSVEVVYLSS). Residues 469–475 (SLMKVTQ) lie on the Extracellular side of the membrane. Residues 476–496 (GGWVPLVLALIFMSVMYIWHY) form a helical membrane-spanning segment. Residues 497–783 (GTRKKYQYDL…LIEVGMAYQV (287 aa)) are Cytoplasmic-facing. Residues 662 to 691 (DLADSMTMRSTKSESLRSLQSSYEQESPNV) are disordered. A compositionally biased stretch (polar residues) spans 677-691 (LRSLQSSYEQESPNV).

It belongs to the HAK/KUP transporter (TC 2.A.72.3) family.

It is found in the cell membrane. The enzyme catalyses K(+)(in) = K(+)(out). The catalysed reaction is Na(+)(in) = Na(+)(out). Its function is as follows. High-affinity potassium transporter. Can transport sodium under high sodium and low potassium concentrations in the extracellular environment. The polypeptide is Probable potassium transporter 2 (HAK2) (Oryza sativa subsp. japonica (Rice)).